The following is a 272-amino-acid chain: tRNA pseudouridine synthase B (272 aa).

The active-site Nucleophile is the Asp-38.

This sequence belongs to the pseudouridine synthase TruB family. Type 1 subfamily.

The enzyme catalyses uridine(55) in tRNA = pseudouridine(55) in tRNA. Responsible for synthesis of pseudouridine from uracil-55 in the psi GC loop of transfer RNAs. The protein is tRNA pseudouridine synthase B of Campylobacter jejuni subsp. jejuni serotype O:6 (strain 81116 / NCTC 11828).